A 310-amino-acid polypeptide reads, in one-letter code: L-lactate dehydrogenase (310 aa).

NAD(+) contacts are provided by residues Val11, Asp32, Tyr62, and 76–77; that span reads GV. Substrate is bound by residues Gln79, Arg85, and 117 to 120; that span reads NPVD. NAD(+) is bound by residues 115 to 117 and Ser140; that span reads ATN. 145 to 148 lines the substrate pocket; the sequence is DTAR. Positions 150 and 165 each coordinate beta-D-fructose 1,6-bisphosphate. His172 serves as the catalytic Proton acceptor. Tyr218 carries the post-translational modification Phosphotyrosine. Substrate is bound at residue Thr227.

Belongs to the LDH/MDH superfamily. LDH family. Homotetramer.

It is found in the cytoplasm. The catalysed reaction is (S)-lactate + NAD(+) = pyruvate + NADH + H(+). It functions in the pathway fermentation; pyruvate fermentation to lactate; (S)-lactate from pyruvate: step 1/1. Its activity is regulated as follows. Activated by citrate at pH 5. Allosterically activated by fructose 1,6-bisphosphate (FBP) at pH from 5.8 to 7.2. Its function is as follows. Catalyzes the conversion of lactate to pyruvate. This chain is L-lactate dehydrogenase, found in Thermus aquaticus.